A 180-amino-acid polypeptide reads, in one-letter code: Large ribosomal subunit protein uL18m (180 aa).

The protein belongs to the universal ribosomal protein uL18 family. Component of the mitochondrial ribosome large subunit (39S) which comprises a 16S rRNA and about 50 distinct proteins.

It localises to the mitochondrion. In terms of biological role, together with thiosulfate sulfurtransferase (TST), acts as a mitochondrial import factor for the cytosolic 5S rRNA. The precursor form shows RNA chaperone activity; is able to fold the 5S rRNA into an import-competent conformation that is recognized by rhodanese (TST). Both the cytoplasmic and mitochondrial forms are able to bind to the helix IV-loop D in the gamma domain of the 5S rRNA. The polypeptide is Large ribosomal subunit protein uL18m (MRPL18) (Bos taurus (Bovine)).